The primary structure comprises 214 residues: Large ribosomal subunit protein uL3 (214 aa).

An N5-methylglutamine modification is found at Gln153.

The protein belongs to the universal ribosomal protein uL3 family. Part of the 50S ribosomal subunit. Forms a cluster with proteins L14 and L19. Methylated by PrmB.

Functionally, one of the primary rRNA binding proteins, it binds directly near the 3'-end of the 23S rRNA, where it nucleates assembly of the 50S subunit. The chain is Large ribosomal subunit protein uL3 from Aromatoleum aromaticum (strain DSM 19018 / LMG 30748 / EbN1) (Azoarcus sp. (strain EbN1)).